The primary structure comprises 919 residues: Probable dipeptidyl-aminopeptidase B (919 aa).

The interval 1–89 is disordered; that stretch reads MGANSRVNDD…DGYVPSGGKP (89 aa). Topologically, residues 1–95 are cytoplasmic; it reads MGANSRVNDD…GGKPAQRRTR (95 aa). The span at 27-38 shows a compositional bias: low complexity; sequence DSSSTASISLTL. Residues 44-55 are compositionally biased toward polar residues; sequence HTATEPSKSTNG. A helical; Signal-anchor for type II membrane protein membrane pass occupies residues 96 to 116; it reads IVFWLLVALCVGGWAMAFIIM. The Vacuolar portion of the chain corresponds to 117-919; the sequence is ATSPNNRHST…RVIRRLLHFG (803 aa). Positions 121–150 are disordered; that stretch reads NNRHSTSDSSSGGSESEIVKPNTPHDGKKI. The span at 127-136 shows a compositional bias: low complexity; it reads SDSSSGGSES. N-linked (GlcNAc...) asparagine glycosylation is found at asparagine 207, asparagine 303, asparagine 355, asparagine 577, and asparagine 665. Serine 760 serves as the catalytic Charge relay system. Residues asparagine 814 and asparagine 819 are each glycosylated (N-linked (GlcNAc...) asparagine). Residues aspartate 837 and histidine 870 each act as charge relay system in the active site.

This sequence belongs to the peptidase S9B family.

It localises to the vacuole membrane. The enzyme catalyses Release of an N-terminal dipeptide, Xaa-Yaa-|-Zaa-, from a polypeptide, preferentially when Yaa is Pro, provided Zaa is neither Pro nor hydroxyproline.. Functionally, type IV dipeptidyl-peptidase which removes N-terminal dipeptides sequentially from polypeptides having unsubstituted N-termini provided that the penultimate residue is proline. This is Probable dipeptidyl-aminopeptidase B (DAPB) from Arthroderma otae (strain ATCC MYA-4605 / CBS 113480) (Microsporum canis).